The following is a 671-amino-acid chain: DNA ligase (671 aa).

Residues 31–35 (DAEYD), 80–81 (SL), and glutamate 110 each bind NAD(+). The N6-AMP-lysine intermediate role is filled by lysine 112. NAD(+) contacts are provided by arginine 133, glutamate 167, lysine 283, and lysine 307. 4 residues coordinate Zn(2+): cysteine 401, cysteine 404, cysteine 419, and cysteine 424. Residues 587-671 (EEELVFAGKT…YLPDEGGLNE (85 aa)) form the BRCT domain.

Belongs to the NAD-dependent DNA ligase family. LigA subfamily. Mg(2+) serves as cofactor. The cofactor is Mn(2+).

It catalyses the reaction NAD(+) + (deoxyribonucleotide)n-3'-hydroxyl + 5'-phospho-(deoxyribonucleotide)m = (deoxyribonucleotide)n+m + AMP + beta-nicotinamide D-nucleotide.. Functionally, DNA ligase that catalyzes the formation of phosphodiester linkages between 5'-phosphoryl and 3'-hydroxyl groups in double-stranded DNA using NAD as a coenzyme and as the energy source for the reaction. It is essential for DNA replication and repair of damaged DNA. In Listeria monocytogenes serotype 4a (strain HCC23), this protein is DNA ligase.